The primary structure comprises 365 residues: Peptide chain release factor 2 (365 aa).

Residue Gln-252 is modified to N5-methylglutamine.

The protein belongs to the prokaryotic/mitochondrial release factor family. In terms of processing, methylated by PrmC. Methylation increases the termination efficiency of RF2.

The protein resides in the cytoplasm. Peptide chain release factor 2 directs the termination of translation in response to the peptide chain termination codons UGA and UAA. The sequence is that of Peptide chain release factor 2 from Acidithiobacillus ferrooxidans (strain ATCC 23270 / DSM 14882 / CIP 104768 / NCIMB 8455) (Ferrobacillus ferrooxidans (strain ATCC 23270)).